Consider the following 399-residue polypeptide: Acetate kinase (399 aa).

N10 provides a ligand contact to Mg(2+). K17 serves as a coordination point for ATP. R91 lines the substrate pocket. The active-site Proton donor/acceptor is D148. ATP is bound by residues 208-212 (HLGNG), 283-285 (DCR), and 331-335 (GIGEN). E385 provides a ligand contact to Mg(2+).

Belongs to the acetokinase family. Homodimer. Mg(2+) serves as cofactor. Requires Mn(2+) as cofactor.

It is found in the cytoplasm. It catalyses the reaction acetate + ATP = acetyl phosphate + ADP. The protein operates within metabolic intermediate biosynthesis; acetyl-CoA biosynthesis; acetyl-CoA from acetate: step 1/2. Functionally, catalyzes the formation of acetyl phosphate from acetate and ATP. Can also catalyze the reverse reaction. The chain is Acetate kinase from Shewanella sp. (strain ANA-3).